Consider the following 187-residue polypeptide: Threonylcarbamoyl-AMP synthase (187 aa).

The region spanning 3–187 (NSELLKIIWA…LLNGYLYRKR (185 aa)) is the YrdC-like domain.

This sequence belongs to the SUA5 family. TsaC subfamily.

The protein resides in the cytoplasm. The catalysed reaction is L-threonine + hydrogencarbonate + ATP = L-threonylcarbamoyladenylate + diphosphate + H2O. Functionally, required for the formation of a threonylcarbamoyl group on adenosine at position 37 (t(6)A37) in tRNAs that read codons beginning with adenine. Catalyzes the conversion of L-threonine, HCO(3)(-)/CO(2) and ATP to give threonylcarbamoyl-AMP (TC-AMP) as the acyladenylate intermediate, with the release of diphosphate. This is Threonylcarbamoyl-AMP synthase from Riesia pediculicola (strain USDA).